A 366-amino-acid chain; its full sequence is RNA 3'-terminal phosphate cyclase (366 aa).

The ATP site is built by glutamine 104, proline 131, tyrosine 294, aspartate 297, glutamine 298, and histidine 320. Catalysis depends on histidine 320, which acts as the Tele-AMP-histidine intermediate.

The protein belongs to the RNA 3'-terminal cyclase family. Type 1 subfamily.

It localises to the nucleus. The protein resides in the nucleoplasm. The enzyme catalyses a 3'-end 3'-phospho-ribonucleotide-RNA + ATP = a 3'-end 2',3'-cyclophospho-ribonucleotide-RNA + AMP + diphosphate. In terms of biological role, catalyzes the conversion of 3'-phosphate to a 2',3'-cyclic phosphodiester at the end of RNA. The mechanism of action of the enzyme occurs in 3 steps: (A) adenylation of the enzyme by ATP; (B) transfer of adenylate to an RNA-N3'P to produce RNA-N3'PP5'A; (C) and attack of the adjacent 2'-hydroxyl on the 3'-phosphorus in the diester linkage to produce the cyclic end product. Likely functions in some aspects of cellular RNA processing. Function plays an important role in regulating axon regeneration by inhibiting central nervous system (CNS) axon regeneration following optic nerve injury. This chain is RNA 3'-terminal phosphate cyclase (RTCA), found in Bos taurus (Bovine).